We begin with the raw amino-acid sequence, 330 residues long: Uroporphyrinogen decarboxylase (330 aa).

Substrate contacts are provided by residues 10–14 (RQAGR), phenylalanine 29, serine 59, aspartate 60, tyrosine 137, serine 192, and histidine 307.

The protein belongs to the uroporphyrinogen decarboxylase family. As to quaternary structure, homodimer.

It localises to the plastid. Its subcellular location is the chloroplast. It catalyses the reaction uroporphyrinogen III + 4 H(+) = coproporphyrinogen III + 4 CO2. It functions in the pathway porphyrin-containing compound metabolism; protoporphyrin-IX biosynthesis; coproporphyrinogen-III from 5-aminolevulinate: step 4/4. Functionally, catalyzes the decarboxylation of four acetate groups of uroporphyrinogen-III to yield coproporphyrinogen-III. This Hordeum vulgare (Barley) protein is Uroporphyrinogen decarboxylase (DCUP).